The chain runs to 499 residues: BTB/POZ domain-containing protein At5g60050 (499 aa).

Low complexity predominate over residues 18-30 (PSLSFSPSRISSP). A disordered region spans residues 18–57 (PSLSFSPSRISSPIKLSTASPPLPPPPPPPPNESTLSNPT). Pro residues predominate over residues 38-49 (PPLPPPPPPPPN). The 74-residue stretch at 99–172 (GDVKLTVVGK…MYSDDLKKKL (74 aa)) folds into the BTB domain.

It participates in protein modification; protein ubiquitination. May act as a substrate-specific adapter of an E3 ubiquitin-protein ligase complex (CUL3-RBX1-BTB) which mediates the ubiquitination and subsequent proteasomal degradation of target proteins. This chain is BTB/POZ domain-containing protein At5g60050, found in Arabidopsis thaliana (Mouse-ear cress).